The sequence spans 250 residues: Formylaminopyrimidine transport permease protein ThiX (250 aa).

A run of 6 helical transmembrane segments spans residues 5–25 (YQAL…EISA), 62–82 (IISI…LLMF), 94–114 (LLVA…VLWF), 115–135 (GYSI…PITV), 172–192 (LPSF…GAAV), and 216–236 (PGVF…FAAI). The ABC transmembrane type-1 domain maps to 56–237 (LPATLAIISI…LGILGFAAIK (182 aa)).

This sequence belongs to the binding-protein-dependent transport system permease family. As to quaternary structure, the complex is likely composed of an ATP-binding protein (ThiZ), a transmembrane protein (ThiX) and a solute-binding protein (ThiY).

It is found in the cell membrane. The protein operates within cofactor biosynthesis; thiamine diphosphate biosynthesis. Functionally, participates in a thiamine pyrimidine salvage pathway as part of the ABC transporter complex ThiXYZ involved in the import of thiamine degradation products such as the formylaminopyrimidine N-formyl-4-amino-5-aminomethyl-2-methylpyrimidine (FAMP). Is probably responsible for the translocation of the substrate across the membrane. In Halalkalibacterium halodurans (strain ATCC BAA-125 / DSM 18197 / FERM 7344 / JCM 9153 / C-125) (Bacillus halodurans), this protein is Formylaminopyrimidine transport permease protein ThiX.